We begin with the raw amino-acid sequence, 204 residues long: MSKRSATVERNTLETQIQATINLDGTGQCTLDTGLPFLEHMLDQVARHGLVDLDIKAKGDLHIDAHHTVEDIGITLGQAFAKAVGDKKGVRRYGHAYVPLDEALSRVVLDLSGRPGLEMFVEFTRGSIGGFDVDLFYEFFQGFVNHAMITLHIDNLRGKNAHHQAETVFKAFGRALRMAVEPDPRMDGITPSTKGTLSESGDSQ.

The segment at 183-204 (DPRMDGITPSTKGTLSESGDSQ) is disordered. A compositionally biased stretch (polar residues) spans 190–204 (TPSTKGTLSESGDSQ).

This sequence belongs to the imidazoleglycerol-phosphate dehydratase family.

Its subcellular location is the cytoplasm. It catalyses the reaction D-erythro-1-(imidazol-4-yl)glycerol 3-phosphate = 3-(imidazol-4-yl)-2-oxopropyl phosphate + H2O. The protein operates within amino-acid biosynthesis; L-histidine biosynthesis; L-histidine from 5-phospho-alpha-D-ribose 1-diphosphate: step 6/9. This is Imidazoleglycerol-phosphate dehydratase from Alcanivorax borkumensis (strain ATCC 700651 / DSM 11573 / NCIMB 13689 / SK2).